We begin with the raw amino-acid sequence, 141 residues long: Nucleoside diphosphate kinase (141 aa).

ATP contacts are provided by Lys11, Phe59, Arg87, Thr93, Arg104, and Asn114. His117 acts as the Pros-phosphohistidine intermediate in catalysis.

It belongs to the NDK family. In terms of assembly, homotetramer. Requires Mg(2+) as cofactor.

Its subcellular location is the cytoplasm. The catalysed reaction is a 2'-deoxyribonucleoside 5'-diphosphate + ATP = a 2'-deoxyribonucleoside 5'-triphosphate + ADP. It catalyses the reaction a ribonucleoside 5'-diphosphate + ATP = a ribonucleoside 5'-triphosphate + ADP. In terms of biological role, major role in the synthesis of nucleoside triphosphates other than ATP. The ATP gamma phosphate is transferred to the NDP beta phosphate via a ping-pong mechanism, using a phosphorylated active-site intermediate. The protein is Nucleoside diphosphate kinase of Paracidovorax citrulli (strain AAC00-1) (Acidovorax citrulli).